The chain runs to 215 residues: Cytochrome b6 (215 aa).

The chain crosses the membrane as a helical span at residues 32 to 52 (IFYCLGGITLTCFLVQVATGF). Residue C35 coordinates heme c. 2 residues coordinate heme b: H86 and H100. 3 helical membrane-spanning segments follow: residues 90–110 (ASMMVLMMILHIFRVYLTGGF), 116–136 (LTWVTGVILAVLTVSFGVTGY), and 186–206 (LHTFVLPLLTAVFMLMHFLMI). H187 and H202 together coordinate heme b.

It belongs to the cytochrome b family. PetB subfamily. The 4 large subunits of the cytochrome b6-f complex are cytochrome b6, subunit IV (17 kDa polypeptide, PetD), cytochrome f and the Rieske protein, while the 4 small subunits are PetG, PetL, PetM and PetN. The complex functions as a dimer. Requires heme b as cofactor. The cofactor is heme c.

The protein resides in the plastid. It localises to the chloroplast thylakoid membrane. In terms of biological role, component of the cytochrome b6-f complex, which mediates electron transfer between photosystem II (PSII) and photosystem I (PSI), cyclic electron flow around PSI, and state transitions. The chain is Cytochrome b6 from Physcomitrium patens (Spreading-leaved earth moss).